The chain runs to 200 residues: ATP-dependent Clp protease proteolytic subunit (200 aa).

Residue serine 103 is the Nucleophile of the active site. Histidine 128 is a catalytic residue.

Belongs to the peptidase S14 family. Fourteen ClpP subunits assemble into 2 heptameric rings which stack back to back to give a disk-like structure with a central cavity, resembling the structure of eukaryotic proteasomes.

The protein resides in the cytoplasm. It carries out the reaction Hydrolysis of proteins to small peptides in the presence of ATP and magnesium. alpha-casein is the usual test substrate. In the absence of ATP, only oligopeptides shorter than five residues are hydrolyzed (such as succinyl-Leu-Tyr-|-NHMec, and Leu-Tyr-Leu-|-Tyr-Trp, in which cleavage of the -Tyr-|-Leu- and -Tyr-|-Trp bonds also occurs).. In terms of biological role, cleaves peptides in various proteins in a process that requires ATP hydrolysis. Has a chymotrypsin-like activity. Plays a major role in the degradation of misfolded proteins. This Vibrio vulnificus (strain CMCP6) protein is ATP-dependent Clp protease proteolytic subunit.